A 132-amino-acid chain; its full sequence is uncharacterized protein (132 aa).

The segment at 107 to 132 is disordered; the sequence is LNTFSGSGQKHSQPGSGQHPFSFRKD. Residues 108–122 are compositionally biased toward polar residues; it reads NTFSGSGQKHSQPGS.

This is an uncharacterized protein from Bacillus subtilis (strain 168).